We begin with the raw amino-acid sequence, 1036 residues long: Phytosulfokine receptor 2 (1036 aa).

A signal peptide spans 1–16 (MVIILLLVFFVGSSVS). N-linked (GlcNAc...) asparagine glycans are attached at residues Asn-36 and Asn-45. 17 LRR repeats span residues 89-111 (ELRV…ISKL), 113-136 (QLQV…SGLK), 137-159 (LIQS…GVFP), 160-182 (GLVM…LCSS), 185-207 (GIQV…YNCS), 209-231 (SIQQ…LYSI), 233-256 (ELEQ…SNLS), 257-279 (GLKS…FGNL), 281-303 (QLEH…LSQC), 305-326 (KLRV…NFTG), 329-351 (DLCV…LGHC), 353-375 (KMKI…FKNL), 377-398 (SLLF…MNVL), 403-423 (NLST…NNVT), 427-450 (NLAI…LNCK), 451-473 (KLEV…IGKM), and 475-498 (SLFY…TELK). N-linked (GlcNAc...) asparagine glycosylation is found at Asn-142, Asn-165, and Asn-205. Asn-251, Asn-254, and Asn-278 each carry an N-linked (GlcNAc...) asparagine glycan. Asn-313 and Asn-323 each carry an N-linked (GlcNAc...) asparagine glycan. Residues Asn-385, Asn-403, and Asn-421 are each glycosylated (N-linked (GlcNAc...) asparagine). N-linked (GlcNAc...) asparagine glycans are attached at residues Asn-483, Asn-504, Asn-523, Asn-549, and Asn-571. LRR repeat units follow at residues 561 to 583 (ELHM…ISGL) and 585 to 606 (NLEV…SFQS). The chain crosses the membrane as a helical span at residues 680–700 (IVVLTISLAIGITLLLSVILL). A Phosphothreonine modification is found at Thr-751. One can recognise a Protein kinase domain in the interval 754–1025 (FSQANIIGCG…PLIEEVVTWL (272 aa)). Residues 760-768 (IGCGGFGLV) and Lys-782 each bind ATP. 2 positions are modified to phosphotyrosine: Tyr-827 and Tyr-867. The Proton acceptor role is filled by Asp-880. A Phosphotyrosine modification is found at Tyr-922. Residues 995-1020 (RTVLEMLEIACKCIDHEPRRRPLIEE) form an LRR 20 repeat.

It belongs to the protein kinase superfamily. Ser/Thr protein kinase family.

Its subcellular location is the cell membrane. The enzyme catalyses L-seryl-[protein] + ATP = O-phospho-L-seryl-[protein] + ADP + H(+). It catalyses the reaction L-threonyl-[protein] + ATP = O-phospho-L-threonyl-[protein] + ADP + H(+). Its function is as follows. Phytosulfokine receptor with a serine/threonine-protein kinase activity. This chain is Phytosulfokine receptor 2 (PSKR2), found in Arabidopsis thaliana (Mouse-ear cress).